A 396-amino-acid polypeptide reads, in one-letter code: Elongation factor Tu (396 aa).

The region spanning 10 to 206 is the tr-type G domain; it reads KAHVNIGTIG…AVDEYIPDPV (197 aa). The G1 stretch occupies residues 19 to 26; sequence GHVDHGKT. 19–26 contacts GTP; sequence GHVDHGKT. Thr-26 provides a ligand contact to Mg(2+). The segment at 62–66 is G2; it reads GITIN. The segment at 83–86 is G3; sequence DAPG. Residues 83 to 87 and 138 to 141 contribute to the GTP site; these read DAPGH and NKSD. The interval 138–141 is G4; the sequence is NKSD. Positions 176–178 are G5; it reads SAL.

This sequence belongs to the TRAFAC class translation factor GTPase superfamily. Classic translation factor GTPase family. EF-Tu/EF-1A subfamily. As to quaternary structure, monomer.

Its subcellular location is the cytoplasm. The enzyme catalyses GTP + H2O = GDP + phosphate + H(+). GTP hydrolase that promotes the GTP-dependent binding of aminoacyl-tRNA to the A-site of ribosomes during protein biosynthesis. The sequence is that of Elongation factor Tu from Micrococcus luteus (Micrococcus lysodeikticus).